We begin with the raw amino-acid sequence, 274 residues long: NH(3)-dependent NAD(+) synthetase (274 aa).

46-53 (GISGGQDS) contacts ATP. Mg(2+) is bound at residue D52. A deamido-NAD(+)-binding site is contributed by R140. T160 provides a ligand contact to ATP. Position 165 (E165) interacts with Mg(2+). 2 residues coordinate deamido-NAD(+): K173 and D180. Residues K189 and T211 each contribute to the ATP site. Deamido-NAD(+) is bound at residue 260-261 (HK).

This sequence belongs to the NAD synthetase family. In terms of assembly, homodimer.

The catalysed reaction is deamido-NAD(+) + NH4(+) + ATP = AMP + diphosphate + NAD(+) + H(+). It participates in cofactor biosynthesis; NAD(+) biosynthesis; NAD(+) from deamido-NAD(+) (ammonia route): step 1/1. Functionally, catalyzes the ATP-dependent amidation of deamido-NAD to form NAD. Uses ammonia as a nitrogen source. This chain is NH(3)-dependent NAD(+) synthetase, found in Streptococcus mutans serotype c (strain ATCC 700610 / UA159).